A 414-amino-acid polypeptide reads, in one-letter code: Schlafen-like protein 1 (414 aa).

Residues 141 to 203 (LHHREQDDSG…ISQNRPSGVR (63 aa)) are disordered. Over residues 154–185 (SHSPGPSPGPSPGPSPGFRRPPLPQLADPPPN) the composition is skewed to pro residues. 268 to 275 (GVEDSGLV) serves as a coordination point for ATP. A coiled-coil region spans residues 373–407 (RQKWTAELSKLEEKVDVLTLEKEQLQEQLRQRQTL).

This sequence belongs to the Schlafen family. Subgroup I subfamily.

The sequence is that of Schlafen-like protein 1 (Slfnl1) from Rattus norvegicus (Rat).